The primary structure comprises 288 residues: Serine/threonine-protein phosphatase PGAM5, mitochondrial (288 aa).

Residues 1-6 (MAFRQA) lie on the Mitochondrial matrix side of the membrane. A helical membrane pass occupies residues 7–29 (LQLAACGLAGGSAAVLFSAVAVG). The Mitochondrial intermembrane segment spans residues 30–288 (KPRGGGDADT…FMPPDKITRS (259 aa)). The segment at 76-81 (NVESGE) is interaction with KEAP1. 2 positions are modified to phosphoserine: Ser79 and Ser86. Lys115, Lys143, and Lys190 each carry N6-acetyllysine.

This sequence belongs to the phosphoglycerate mutase family. BPG-dependent PGAM subfamily. In terms of assembly, dimer. Forms a ternary complex with NFE2L2 and KEAP1. Interacts with BCL2L1 and MAP3K5. Upon TNF-induced necrosis, forms in complex with RIPK1, RIPK3 and MLKL; the formation of this complex leads to PGAM5 phosphorylation. Isoform 2, but not isoform 1, interacts with DNM1L; this interaction leads to DNM1L dephosphorylation and activation and eventually to mitochondria fragmentation. Post-translationally, phosphorylated by the RIPK1/RIPK3 complex under necrotic conditions. This phosphorylation increases PGAM5 phosphatase activity. In terms of processing, proteolytically cleaved by PARL in response to loss of mitochondrial membrane potential.

The protein resides in the mitochondrion outer membrane. Its subcellular location is the mitochondrion inner membrane. It catalyses the reaction O-phospho-L-seryl-[protein] + H2O = L-seryl-[protein] + phosphate. The catalysed reaction is O-phospho-L-threonyl-[protein] + H2O = L-threonyl-[protein] + phosphate. Functionally, mitochondrial serine/threonine phosphatase that dephosphorylates various substrates and thus plays a role in different biological processes including cellular senescence or mitophagy. Modulates cellular senescence by regulating mitochondrial dynamics. Mechanistically, participates in mitochondrial fission through dephosphorylating DNM1L/DRP1. Additionally, dephosphorylates MFN2 in a stress-sensitive manner and consequently protects it from ubiquitination and degradation to promote mitochondrial network formation. Regulates mitophagy independent of PARKIN by interacting with and dephosphorylating FUNDC1, which interacts with LC3. Regulates anti-oxidative response by forming a tertiary complex with KEAP1 and NRF2. Regulates necroptosis by acting as a RIPK3 target and recruiting the RIPK1-RIPK3-MLKL necrosis 'attack' complex to mitochondria. In Mus musculus (Mouse), this protein is Serine/threonine-protein phosphatase PGAM5, mitochondrial (Pgam5).